The chain runs to 511 residues: 2-isopropylmalate synthase (511 aa).

One can recognise a Pyruvate carboxyltransferase domain in the interval 5–267 (LIVFDTTLRD…DTRIDATQIV (263 aa)). 4 residues coordinate Mn(2+): Asp-14, His-202, His-204, and Asn-238. Residues 393-511 (RLVASRFHSE…SKLERLNPQL (119 aa)) are regulatory domain.

The protein belongs to the alpha-IPM synthase/homocitrate synthase family. LeuA type 1 subfamily. Homodimer. Mn(2+) is required as a cofactor.

It is found in the cytoplasm. The catalysed reaction is 3-methyl-2-oxobutanoate + acetyl-CoA + H2O = (2S)-2-isopropylmalate + CoA + H(+). The protein operates within amino-acid biosynthesis; L-leucine biosynthesis; L-leucine from 3-methyl-2-oxobutanoate: step 1/4. In terms of biological role, catalyzes the condensation of the acetyl group of acetyl-CoA with 3-methyl-2-oxobutanoate (2-ketoisovalerate) to form 3-carboxy-3-hydroxy-4-methylpentanoate (2-isopropylmalate). The polypeptide is 2-isopropylmalate synthase (Aromatoleum aromaticum (strain DSM 19018 / LMG 30748 / EbN1) (Azoarcus sp. (strain EbN1))).